The sequence spans 510 residues: ATP synthase subunit alpha (510 aa).

Gly169 to Thr176 serves as a coordination point for ATP.

It belongs to the ATPase alpha/beta chains family. In terms of assembly, F-type ATPases have 2 components, CF(1) - the catalytic core - and CF(0) - the membrane proton channel. CF(1) has five subunits: alpha(3), beta(3), gamma(1), delta(1), epsilon(1). CF(0) has four main subunits: a(1), b(1), b'(1) and c(9-12).

It is found in the cell inner membrane. The enzyme catalyses ATP + H2O + 4 H(+)(in) = ADP + phosphate + 5 H(+)(out). Its function is as follows. Produces ATP from ADP in the presence of a proton gradient across the membrane. The alpha chain is a regulatory subunit. This chain is ATP synthase subunit alpha, found in Rhodopseudomonas palustris (strain BisB18).